A 1059-amino-acid chain; its full sequence is Eukaryotic translation initiation factor 3 subunit A (1059 aa).

Positions 99-130 (AAEKVTAAQAKADEVQSSIEATTSNIDDLEAS) form a coiled coil. The region spanning 337 to 521 (LQRAATFVIL…GVLSFDADVF (185 aa)) is the PCI domain. The stretch at 586 to 905 (EALARAKAGA…KAEKEKLAAT (320 aa)) forms a coiled coil. The span at 794 to 902 (RRDEFEKRRR…ARRKAEKEKL (109 aa)) shows a compositional bias: basic and acidic residues. The tract at residues 794 to 1059 (RRDEFEKRRR…YVPKWRREGA (266 aa)) is disordered. Composition is skewed to low complexity over residues 908-927 (AYRP…PRIA), 942-958 (KAAS…AAEP), 965-988 (AAAP…GNRP), and 1005-1024 (AAAV…PQRA).

It belongs to the eIF-3 subunit A family. As to quaternary structure, component of the eukaryotic translation initiation factor 3 (eIF-3) complex.

It is found in the cytoplasm. In terms of biological role, RNA-binding component of the eukaryotic translation initiation factor 3 (eIF-3) complex, which is involved in protein synthesis of a specialized repertoire of mRNAs and, together with other initiation factors, stimulates binding of mRNA and methionyl-tRNAi to the 40S ribosome. The eIF-3 complex specifically targets and initiates translation of a subset of mRNAs involved in cell proliferation. The polypeptide is Eukaryotic translation initiation factor 3 subunit A (eif3a) (Neurospora crassa (strain ATCC 24698 / 74-OR23-1A / CBS 708.71 / DSM 1257 / FGSC 987)).